The following is a 269-amino-acid chain: Nitrogen regulatory protein DAL80 (269 aa).

The GATA-type zinc finger occupies 31 to 55 (CQNCFTVKTPLWRRDEHGTVLCNAC).

It localises to the nucleus. Functionally, negative regulator of multiple nitrogen catabolic genes including the allantoin pathway genes. The chain is Nitrogen regulatory protein DAL80 (DAL80) from Saccharomyces cerevisiae (strain ATCC 204508 / S288c) (Baker's yeast).